The sequence spans 372 residues: uncharacterized protein (372 aa).

Residues 1-24 (MSYYQIIVCILASISYIILLEVIA) form the signal peptide. The 124-residue stretch at 92–215 (PNRNDTDASY…SSYNLLWSDL (124 aa)) folds into the PA domain. A helical transmembrane segment spans residues 236-256 (FWPFLLCFSPSIIMLITVQAL). Phosphoserine is present on Ser-280. The RING-type; atypical zinc finger occupies 321-363 (CVICLESFTKGDKVVALPCKHEFHRPCIAKWIVDYRHACPTCN).

It localises to the golgi apparatus membrane. It is found in the vacuole membrane. This is an uncharacterized protein from Schizosaccharomyces pombe (strain 972 / ATCC 24843) (Fission yeast).